The sequence spans 298 residues: ATP synthase gamma chain (298 aa).

Belongs to the ATPase gamma chain family. As to quaternary structure, F-type ATPases have 2 components, CF(1) - the catalytic core - and CF(0) - the membrane proton channel. CF(1) has five subunits: alpha(3), beta(3), gamma(1), delta(1), epsilon(1). CF(0) has three main subunits: a, b and c.

The protein localises to the cell inner membrane. Produces ATP from ADP in the presence of a proton gradient across the membrane. The gamma chain is believed to be important in regulating ATPase activity and the flow of protons through the CF(0) complex. This is ATP synthase gamma chain from Zymomonas mobilis subsp. mobilis (strain ATCC 31821 / ZM4 / CP4).